We begin with the raw amino-acid sequence, 113 residues long: Large ribosomal subunit protein bL19 (113 aa).

The protein belongs to the bacterial ribosomal protein bL19 family.

This protein is located at the 30S-50S ribosomal subunit interface and may play a role in the structure and function of the aminoacyl-tRNA binding site. This Corynebacterium urealyticum (strain ATCC 43042 / DSM 7109) protein is Large ribosomal subunit protein bL19.